Reading from the N-terminus, the 840-residue chain is Translation initiation factor IF-2 (840 aa).

A compositionally biased stretch (basic and acidic residues) spans 95–143; sequence RSPDEIEAERQRELEEQRAAEEAERLKAEEAAARQRAEEEARKAEEAAR. Disordered stretches follow at residues 95 to 155 and 172 to 256; these read RSPD…ATAG and KPAA…PTGP. Residues 144–155 are compositionally biased toward low complexity; that stretch reads AKAAQEAAATAG. Composition is skewed to basic and acidic residues over residues 175 to 191 and 223 to 232; these read AVEE…PKRD and STDEESDGYR. Over residues 233–247 the composition is skewed to basic residues; it reads RGGRGGKSKLKKRNQ. A tr-type G domain is found at 340-509; it reads TRAPVVTVMG…LLQAEVLELK (170 aa). The interval 349 to 356 is G1; it reads GHVDHGKT. A GTP-binding site is contributed by 349–356; that stretch reads GHVDHGKT. A G2 region spans residues 374-378; that stretch reads GITQH. The interval 395 to 398 is G3; sequence DTPG. Residues 395–399 and 449–452 contribute to the GTP site; these read DTPGH and NKID. Residues 449-452 form a G4 region; it reads NKID. Residues 485 to 487 form a G5 region; the sequence is SAK.

The protein belongs to the TRAFAC class translation factor GTPase superfamily. Classic translation factor GTPase family. IF-2 subfamily.

The protein resides in the cytoplasm. One of the essential components for the initiation of protein synthesis. Protects formylmethionyl-tRNA from spontaneous hydrolysis and promotes its binding to the 30S ribosomal subunits. Also involved in the hydrolysis of GTP during the formation of the 70S ribosomal complex. This is Translation initiation factor IF-2 from Pseudomonas aeruginosa (strain LESB58).